The primary structure comprises 70 residues: Large ribosomal subunit protein bL31 (70 aa).

The Zn(2+) site is built by Cys-16, Cys-18, Cys-37, and Cys-40.

Belongs to the bacterial ribosomal protein bL31 family. Type A subfamily. Part of the 50S ribosomal subunit. It depends on Zn(2+) as a cofactor.

Its function is as follows. Binds the 23S rRNA. The chain is Large ribosomal subunit protein bL31 from Shewanella sp. (strain MR-4).